Here is a 329-residue protein sequence, read N- to C-terminus: DNA-directed RNA polymerase subunit alpha (329 aa).

Residues Met1 to Arg234 form an alpha N-terminal domain (alpha-NTD) region. The tract at residues Phe248 to Leu329 is alpha C-terminal domain (alpha-CTD).

This sequence belongs to the RNA polymerase alpha chain family. In terms of assembly, homodimer. The RNAP catalytic core consists of 2 alpha, 1 beta, 1 beta' and 1 omega subunit. When a sigma factor is associated with the core the holoenzyme is formed, which can initiate transcription.

The catalysed reaction is RNA(n) + a ribonucleoside 5'-triphosphate = RNA(n+1) + diphosphate. In terms of biological role, DNA-dependent RNA polymerase catalyzes the transcription of DNA into RNA using the four ribonucleoside triphosphates as substrates. The chain is DNA-directed RNA polymerase subunit alpha from Shewanella baltica (strain OS155 / ATCC BAA-1091).